We begin with the raw amino-acid sequence, 416 residues long: uncharacterized protein (416 aa).

Residues cysteine 63, cysteine 75, cysteine 78, and cysteine 152 each coordinate [4Fe-4S] cluster. Residues glutamine 253, phenylalanine 280, glutamate 300, and aspartate 348 each coordinate S-adenosyl-L-methionine. Cysteine 374 acts as the Nucleophile in catalysis.

The protein belongs to the class I-like SAM-binding methyltransferase superfamily. RNA M5U methyltransferase family.

This is an uncharacterized protein from Agrobacterium fabrum (strain C58 / ATCC 33970) (Agrobacterium tumefaciens (strain C58)).